The chain runs to 754 residues: Protein neuralized (754 aa).

The NHR 1 domain occupies 106–260 (PLQFHSVHGD…NCTGIEFLDS (155 aa)). The segment covering 280 to 297 (QQQQMPQPAANASSALNS) has biased composition (low complexity). A disordered region spans residues 280–308 (QQQQMPQPAANASSALNSHHPHQQSRRSL). A phosphoserine mark is found at Ser338 and Ser341. The NHR 2 domain occupies 368-523 (PVPFHNTKGR…STQSLRMFRQ (156 aa)). The RING-type zinc finger occupies 701–742 (CTICYENPIDSVLYMCGHMCMCYDCAIEQWRGVGGGQCPLCR).

It is found in the nucleus. Its function is as follows. Involved in neurogenesis. Interacts with other neurogenic proteins in the specification of the neuroblast versus epidermoblast cell fate. The sequence is that of Protein neuralized (neur) from Drosophila melanogaster (Fruit fly).